The following is a 354-amino-acid chain: MQAIALPEEICWLLEDAEDFLAEGLQNENLSPGAQDQRDHILRGFQQIKSRYCWDFQPQGDDLGQDGSDENLSGTHGPALASDASFWSDYQEEGIDDIIRGAQELDNVIKQGYLEKKSKDHSFFGSEWQKRWCVISRGLFLYYANEKSKQPKGTFLIKGYNVRMAPHLRKDSKKDSCFELTSQDRRSYEFTAFSPAEARDWVDQISFLLKDLSSLTIPFEEEEEEEEEDKEQEEMYNDIDGFDSARSGSQGRAMALPEPLDKEEDVYEVLPDEDDLEEDACGAHRRRVDYADYYQGLWDCHGDQPDELSFQRGDLIRILSKEYNMYGWWVGELNSIIGIVPKDYLTTAFEMEGR.

The PH domain occupies 107 to 210 (NVIKQGYLEK…WVDQISFLLK (104 aa)). Phosphotyrosine occurs at positions 142 and 236. Residues Tyr267 and Tyr290 each carry the phosphotyrosine; by FYN modification. The interval 285-290 (RRRVDY) is interaction with FYB1. Residues 289-350 (DYADYYQGLW…PKDYLTTAFE (62 aa)) enclose the SH3 domain.

It belongs to the SKAP family. Homodimer. Interacts with FYN. Interacts with PTPRC. Interacts with GRB2 when phosphorylated on Tyr-267. Interacts with FYB1, which is required for SKAP2 protein stability. Part of a complex consisting of SKAP1, FYB1 and CLNK. Interacts with RASGRP1. Interacts with FYB2. Post-translationally, phosphorylated on tyrosines. Phosphorylation by FYN on Tyr-267 is required for GRB2 interaction. Phosphorylation by FYN on Tyr-290 abolishes interaction with FYB1. Tyr-236 is dephosphorylated by PTPRC. As to expression, expressed in mast cells (at protein level).

The protein localises to the cytoplasm. Its subcellular location is the nucleus. It localises to the cell membrane. Positively regulates T-cell receptor signaling by enhancing the MAP kinase pathway. Required for optimal conjugation between T-cells and antigen-presenting cells by promoting the clustering of integrin ITGAL on the surface of T-cells. May be involved in high affinity immunoglobulin epsilon receptor signaling in mast cells. This chain is Src kinase-associated phosphoprotein 1 (Skap1), found in Rattus norvegicus (Rat).